A 274-amino-acid polypeptide reads, in one-letter code: Large ribosomal subunit protein uL2 (274 aa).

Positions 223–258 (VAMNPVDHPHGGGEGRTSGGRHPVTPWGIPTKGYKT) are disordered.

The protein belongs to the universal ribosomal protein uL2 family. As to quaternary structure, part of the 50S ribosomal subunit. Forms a bridge to the 30S subunit in the 70S ribosome.

One of the primary rRNA binding proteins. Required for association of the 30S and 50S subunits to form the 70S ribosome, for tRNA binding and peptide bond formation. It has been suggested to have peptidyltransferase activity; this is somewhat controversial. Makes several contacts with the 16S rRNA in the 70S ribosome. The protein is Large ribosomal subunit protein uL2 of Pelobacter propionicus (strain DSM 2379 / NBRC 103807 / OttBd1).